The primary structure comprises 744 residues: NADH-ubiquinone oxidoreductase 78 kDa subunit, mitochondrial (744 aa).

The segment covering 1-10 has biased composition (polar residues); sequence MLRSTLSRSA. Residues 1-26 are disordered; the sequence is MLRSTLSRSAWRTGRHQAARNASRAF. The transit peptide at 1–33 directs the protein to the mitochondrion; sequence MLRSTLSRSAWRTGRHQAARNASRAFSATAQRP. A 2Fe-2S ferredoxin-type domain is found at 34-112; that stretch reads AEVELTIDGK…GMVVKTNSPL (79 aa). Positions 68, 79, 82, and 96 each coordinate [2Fe-2S] cluster. In terms of domain architecture, 4Fe-4S His(Cys)3-ligated-type spans 112–151; the sequence is LTHKAREGVMEFLLANHPLDCPICDQGGECDLQDQSMRYG. [4Fe-4S] cluster-binding residues include H128, C132, C135, C141, C182, C185, C188, and C232. The region spanning 251–307 is the 4Fe-4S Mo/W bis-MGD-type domain; it reads LKKTESIDVLDGLGSNIRVDTRGLEVMRILPRLNDEVNEEWINDKTRFACDGLKTQR.

Belongs to the complex I 75 kDa subunit family. In terms of assembly, complex I is composed of about 40 different subunits. It depends on [2Fe-2S] cluster as a cofactor. [4Fe-4S] cluster serves as cofactor.

It is found in the mitochondrion inner membrane. It catalyses the reaction a ubiquinone + NADH + 5 H(+)(in) = a ubiquinol + NAD(+) + 4 H(+)(out). Functionally, core subunit of the mitochondrial membrane respiratory chain NADH dehydrogenase (Complex I) that is believed to belong to the minimal assembly required for catalysis. Complex I functions in the transfer of electrons from NADH to the respiratory chain. The immediate electron acceptor for the enzyme is believed to be ubiquinone. This is the largest subunit of complex I and it is a component of the iron-sulfur (IP) fragment of the enzyme. It may form part of the active site crevice where NADH is oxidized. The protein is NADH-ubiquinone oxidoreductase 78 kDa subunit, mitochondrial (nuo78) of Neurospora crassa (strain ATCC 24698 / 74-OR23-1A / CBS 708.71 / DSM 1257 / FGSC 987).